Reading from the N-terminus, the 238-residue chain is E3 ubiquitin-protein ligase ZNRF2 (238 aa).

A disordered region spans residues 1-137 (MGAKQSGPAA…AGGGPGGPRL (137 aa)). G2 carries the N-myristoyl glycine lipid modification. Phosphoserine is present on residues S20, S24, S75, S82, S107, S110, S141, S147, and S189. The segment covering 35–77 (GARAARFAAPVSGAQQPSASAGAAAAAAAAASAPAAPRSRSLG) has biased composition (low complexity). The RING-type; atypical zinc finger occupies 195 to 236 (CAICLEELQQGDTIARLPCLCIYHKGCIDEWFEVNRSCPEHP).

Interacts with UBE2N. Interacts with ZNRF1. Interacts (when phosphorylated) with YWHAE. Post-translationally, phosphorylated; leading to binding to YWHAE. Phosphorylated by MTOR at Ser-147 and dephosphorylated by PP6C. Ser-147 phosphorylation stimulates vesicle-to-cytosol translocation. Expressed primarily in the nervous system. Expression is more intense in the granular cell layer of hippocampus, Purkinje cell layer of the cerebellum and the granular cell layer of the olfactory bulb. Detected in sensory neurons but not expressed in sympatic or enteric neurons. Expressed in testis, adipose tissue, columnar epithelial cells of the gut.

It is found in the endosome membrane. It localises to the lysosome membrane. The protein localises to the presynaptic cell membrane. Its subcellular location is the cytoplasm. It carries out the reaction S-ubiquitinyl-[E2 ubiquitin-conjugating enzyme]-L-cysteine + [acceptor protein]-L-lysine = [E2 ubiquitin-conjugating enzyme]-L-cysteine + N(6)-ubiquitinyl-[acceptor protein]-L-lysine.. The protein operates within protein modification; protein ubiquitination. E3 ubiquitin-protein ligase that plays a role in the establishment and maintenance of neuronal transmission and plasticity. Ubiquitinates the Na(+)/K(+) ATPase alpha-1 subunit/ATP1A1 and thereby influences its endocytosis and/or degradation. Also acts as a positive regulator of mTORC1 activation by amino acids, which functions upstream of the V-ATPase and of Rag-GTPases. In turn, phosphorylation by mTOR leads to its inhibition via targeting to the cytosol allowing a self-regulating feedback mechanism. The chain is E3 ubiquitin-protein ligase ZNRF2 (Znrf2) from Mus musculus (Mouse).